The following is a 126-amino-acid chain: Profilin-1 (126 aa).

This sequence belongs to the profilin family. Occurs in many kinds of cells as a complex with monomeric actin in a 1:1 ratio.

Its subcellular location is the cytoplasm. The protein resides in the cytoskeleton. Binds to actin and affects the structure of the cytoskeleton. At high concentrations, profilin prevents the polymerization of actin, whereas it enhances it at low concentrations. By binding to PIP2, it inhibits the formation of IP3 and DG. The protein is Profilin-1 (proA) of Dictyostelium discoideum (Social amoeba).